The chain runs to 358 residues: Gibberellin 2-beta-dioxygenase 6 (358 aa).

In terms of domain architecture, Fe2OG dioxygenase spans 207-308; sequence DETTCFLRLN…RLSVAYFLCP (102 aa). A 2-oxoglutarate-binding site is contributed by Y218. Fe cation is bound by residues H233, D235, and H289. Residues R299 and S301 each contribute to the 2-oxoglutarate site.

This sequence belongs to the iron/ascorbate-dependent oxidoreductase family. GA2OX subfamily. It depends on L-ascorbate as a cofactor. The cofactor is Fe(2+). Expressed in panicles. Expressed at low levels in young shoots, leaf blades and elongating internodes.

It localises to the cytoplasm. The protein localises to the nucleus. The enzyme catalyses gibberellin A1 + 2-oxoglutarate + O2 = gibberellin A8 + succinate + CO2. Functionally, catalyzes the 2-beta-hydroxylation of several biologically active gibberellins, leading to the homeostatic regulation of their endogenous level. Catabolism of gibberellins (GAs) plays a central role in plant development. In vitro, converts GA12 and GA53 to the corresponding 2-beta-hydroxylated products GA110 and GA97, respectively. The chain is Gibberellin 2-beta-dioxygenase 6 from Oryza sativa subsp. japonica (Rice).